Consider the following 626-residue polypeptide: Dual specificity testis-specific protein kinase 1 (626 aa).

Residues 1-41 (MAGERPPLRGPGPGPGEVPGEGPPGPGGTGGGPGRGRPSSY) form a disordered region. Positions 8-26 (LRGPGPGPGEVPGEGPPGP) are enriched in pro residues. Residues 57–314 (FHCAEKIGAG…TEITQHLEWI (258 aa)) form the Protein kinase domain. Residues 63–71 (IGAGFFSEV) and Lys86 contribute to the ATP site. The active-site Proton acceptor is the Asp175. Ser220 bears the Phosphoserine; by autocatalysis mark. 3 disordered regions span residues 331 to 373 (HNQG…NWGD), 423 to 488 (ETLV…QLPL), and 529 to 564 (WAGEPWNRAQHSLPRAAALERTEPSPPPSAPREPDE). Residue Arg338 is modified to Omega-N-methylarginine. The segment covering 348–357 (PDPRLSRSRS) has biased composition (basic and acidic residues). The tract at residues 419–524 (VTTPETLVQP…NNNPPAVVVN (106 aa)) is required for interaction with YWHAB. The span at 476–485 (EPEPPGPAPQ) shows a compositional bias: pro residues. The tract at residues 527-624 (QGWAGEPWNR…PTPSLQLPGA (98 aa)) is required for interaction with PARVA. The required for interaction with SPRED1 and SPRY2. Required for TESK1-mediated dephosphorylation of SPRY2 and SPRY2 inhibition of ERK phosphorylation stretch occupies residues 527–626 (QGWAGEPWNR…PSLQLPGARS (100 aa)).

Belongs to the protein kinase superfamily. TKL Ser/Thr protein kinase family. Interacts (via both C- and N-termini) with SPRY4 (via C-terminus); the interaction inhibits TESK1 kinase activity. Interacts with TAOK1; the interaction inhibits TAOK1 kinase activity. Interacts (via C-terminus) with SPRED1 (via C-terminus); the interaction inhibits TESK1 kinase activity. Interacts (via C-terminus) with PARVA/PARVIN (via C-terminus); the interaction inhibits TESK1 kinase activity. Interacts with YWHAB/14-3-3 beta; the interaction is dependent on the phosphorylation of TESK1 Ser-437 and inhibits TESK1 kinase activity. Interacts with SPRY1, SPRY3 and SPRED2. Interacts (via C-terminus) with SPRY2 (via C-terminus); the interaction disrupts SPRY2 interaction with PPP2CA/PP2A-C, possibly by vesicular sequestration of SPRY2. Therefore dephosphorylation of SPRY2 by the serine/threonine-protein phosphatase 2A (PP2A) holoenzyme is lost, inhibiting its interaction with GRB2. Mg(2+) serves as cofactor. The cofactor is Mn(2+). Autophosphorylated on serine and tyrosine residues. In terms of tissue distribution, expressed in podocytes and renal tubular cells in the kidney (at protein level).

It is found in the cytoplasm. It localises to the perinuclear region. Its subcellular location is the cytoskeleton. The protein resides in the microtubule organizing center. The protein localises to the centrosome. It is found in the cell projection. It localises to the lamellipodium. It catalyses the reaction L-seryl-[protein] + ATP = O-phospho-L-seryl-[protein] + ADP + H(+). It carries out the reaction L-threonyl-[protein] + ATP = O-phospho-L-threonyl-[protein] + ADP + H(+). The catalysed reaction is L-tyrosyl-[protein] + ATP = O-phospho-L-tyrosyl-[protein] + ADP + H(+). Activated by autophosphorylation on Ser-220. Kinase activity is inhibited by SPRED1. In terms of biological role, dual specificity protein kinase activity catalyzing autophosphorylation and phosphorylation of exogenous substrates on both serine/threonine and tyrosine residues. Regulates the cellular cytoskeleton by enhancing actin stress fiber formation via phosphorylation of cofilin and by preventing microtubule breakdown via inhibition of TAOK1/MARKK kinase activity. Inhibits podocyte motility via regulation of actin cytoskeletal dynamics and phosphorylation of CFL1. Positively regulates integrin-mediated cell spreading, via phosphorylation of cofilin. Suppresses ciliogenesis via multiple pathways; phosphorylation of CFL1, suppression of ciliary vesicle directional trafficking to the ciliary base, and by facilitating YAP1 nuclear localization where it acts as a transcriptional corepressor of the TEAD4 target genes AURKA and PLK1. Probably plays a central role at and after the meiotic phase of spermatogenesis. The sequence is that of Dual specificity testis-specific protein kinase 1 (TESK1) from Homo sapiens (Human).